A 293-amino-acid chain; its full sequence is 4-hydroxy-tetrahydrodipicolinate synthase (293 aa).

A pyruvate-binding site is contributed by Thr-47. The active-site Proton donor/acceptor is Tyr-135. Lys-163 acts as the Schiff-base intermediate with substrate in catalysis. Ile-204 is a pyruvate binding site.

Belongs to the DapA family. In terms of assembly, homotetramer; dimer of dimers.

It is found in the cytoplasm. The catalysed reaction is L-aspartate 4-semialdehyde + pyruvate = (2S,4S)-4-hydroxy-2,3,4,5-tetrahydrodipicolinate + H2O + H(+). The protein operates within amino-acid biosynthesis; L-lysine biosynthesis via DAP pathway; (S)-tetrahydrodipicolinate from L-aspartate: step 3/4. In terms of biological role, catalyzes the condensation of (S)-aspartate-beta-semialdehyde [(S)-ASA] and pyruvate to 4-hydroxy-tetrahydrodipicolinate (HTPA). This chain is 4-hydroxy-tetrahydrodipicolinate synthase, found in Brachyspira hyodysenteriae (strain ATCC 49526 / WA1).